Consider the following 257-residue polypeptide: Imidazole glycerol phosphate synthase subunit HisF (257 aa).

Active-site residues include D12 and D131.

This sequence belongs to the HisA/HisF family. In terms of assembly, heterodimer of HisH and HisF.

It is found in the cytoplasm. It carries out the reaction 5-[(5-phospho-1-deoxy-D-ribulos-1-ylimino)methylamino]-1-(5-phospho-beta-D-ribosyl)imidazole-4-carboxamide + L-glutamine = D-erythro-1-(imidazol-4-yl)glycerol 3-phosphate + 5-amino-1-(5-phospho-beta-D-ribosyl)imidazole-4-carboxamide + L-glutamate + H(+). It participates in amino-acid biosynthesis; L-histidine biosynthesis; L-histidine from 5-phospho-alpha-D-ribose 1-diphosphate: step 5/9. IGPS catalyzes the conversion of PRFAR and glutamine to IGP, AICAR and glutamate. The HisF subunit catalyzes the cyclization activity that produces IGP and AICAR from PRFAR using the ammonia provided by the HisH subunit. The sequence is that of Imidazole glycerol phosphate synthase subunit HisF from Burkholderia vietnamiensis (strain G4 / LMG 22486) (Burkholderia cepacia (strain R1808)).